A 187-amino-acid polypeptide reads, in one-letter code: Ribosome-recycling factor (187 aa).

The protein belongs to the RRF family.

It is found in the cytoplasm. In terms of biological role, responsible for the release of ribosomes from messenger RNA at the termination of protein biosynthesis. May increase the efficiency of translation by recycling ribosomes from one round of translation to another. This chain is Ribosome-recycling factor, found in Rhodopseudomonas palustris (strain HaA2).